The primary structure comprises 165 residues: uncharacterized protein (165 aa).

Residues 1–165 (MDIKVVKGSI…EAWEKVLGLR (165 aa)) enclose the Macro domain.

This is an uncharacterized protein from Aquifex aeolicus (strain VF5).